The following is a 311-amino-acid chain: Methionyl-tRNA formyltransferase (311 aa).

A (6S)-5,6,7,8-tetrahydrofolate-binding site is contributed by 109–112 (SLLP).

Belongs to the Fmt family.

The enzyme catalyses L-methionyl-tRNA(fMet) + (6R)-10-formyltetrahydrofolate = N-formyl-L-methionyl-tRNA(fMet) + (6S)-5,6,7,8-tetrahydrofolate + H(+). Functionally, attaches a formyl group to the free amino group of methionyl-tRNA(fMet). The formyl group appears to play a dual role in the initiator identity of N-formylmethionyl-tRNA by promoting its recognition by IF2 and preventing the misappropriation of this tRNA by the elongation apparatus. This Staphylococcus aureus (strain USA300) protein is Methionyl-tRNA formyltransferase.